We begin with the raw amino-acid sequence, 380 residues long: 1-deoxy-D-xylulose 5-phosphate reductoisomerase (380 aa).

Ser10, Gly11, Ser12, Ile13, Gly36, Lys37, Asn38, and Asn120 together coordinate NADPH. 1-deoxy-D-xylulose 5-phosphate is bound at residue Lys121. Glu122 contributes to the NADPH binding site. Residue Asp146 participates in Mn(2+) binding. 1-deoxy-D-xylulose 5-phosphate contacts are provided by Ser147, Glu148, Ser172, and His195. Position 148 (Glu148) interacts with Mn(2+). Gly201 is a binding site for NADPH. Positions 208, 213, 214, and 217 each coordinate 1-deoxy-D-xylulose 5-phosphate. Position 217 (Glu217) interacts with Mn(2+).

The protein belongs to the DXR family. Requires Mg(2+) as cofactor. It depends on Mn(2+) as a cofactor.

The enzyme catalyses 2-C-methyl-D-erythritol 4-phosphate + NADP(+) = 1-deoxy-D-xylulose 5-phosphate + NADPH + H(+). It participates in isoprenoid biosynthesis; isopentenyl diphosphate biosynthesis via DXP pathway; isopentenyl diphosphate from 1-deoxy-D-xylulose 5-phosphate: step 1/6. In terms of biological role, catalyzes the NADPH-dependent rearrangement and reduction of 1-deoxy-D-xylulose-5-phosphate (DXP) to 2-C-methyl-D-erythritol 4-phosphate (MEP). In Bacillus cereus (strain AH187), this protein is 1-deoxy-D-xylulose 5-phosphate reductoisomerase.